Consider the following 150-residue polypeptide: C-type lectin mosGCTL-7 (150 aa).

The signal sequence occupies residues 1–17; sequence MQLVHVLVVLLSVVAHA. Residues 18–140 enclose the C-type lectin domain; the sequence is KKFFIPNLKA…CRGFKAYIVC (123 aa). The N-linked (GlcNAc...) asparagine glycan is linked to Asn-67. A disulfide bridge connects residues Cys-111 and Cys-131.

As to quaternary structure, interacts with putative receptor-type tyrosine-protein phosphatase mosPTP-1; the interaction probably mediates the recruitment of Japanese encephalitis virus particles in complex with C-type lectin mosGCTL-7 to the cell surface. In terms of assembly, (Microbial infection) Interacts with envelope protein E (glycosylated) of Japanese encephalitis virus in a calcium-dependent manner.

The protein resides in the secreted. In terms of biological role, carbohydrate-binding protein. Functionally, (Microbial infection) Facilitates Japanese encephalitis virus infection in mosquitoes probably via capturing viral particles and presenting them to a ligand on the cell surface, thereby facilitating viral entry. The chain is C-type lectin mosGCTL-7 from Aedes aegypti (Yellowfever mosquito).